The following is a 440-amino-acid chain: Chromosomal replication initiator protein DnaA (440 aa).

The segment at 1–72 (MTELDSLWEA…KEFAQRELGR (72 aa)) is domain I, interacts with DnaA modulators. The domain II stretch occupies residues 72 to 103 (RNIEPHYVLEGEFTYTNKKTEDDPTPSFEMDT). The tract at residues 104–320 (PLNPHYNFGT…GALTKVQAFA (217 aa)) is domain III, AAA+ region. 4 residues coordinate ATP: Gly148, Gly150, Lys151, and Thr152. Residues 321 to 440 (NLSGERITPS…ITKLKAKLRS (120 aa)) are domain IV, binds dsDNA.

The protein belongs to the DnaA family. In terms of assembly, oligomerizes as a right-handed, spiral filament on DNA at oriC.

It localises to the cytoplasm. In terms of biological role, plays an essential role in the initiation and regulation of chromosomal replication. ATP-DnaA binds to the origin of replication (oriC) to initiate formation of the DNA replication initiation complex once per cell cycle. Binds the DnaA box (a 9 base pair repeat at the origin) and separates the double-stranded (ds)DNA. Forms a right-handed helical filament on oriC DNA; dsDNA binds to the exterior of the filament while single-stranded (ss)DNA is stabiized in the filament's interior. The ATP-DnaA-oriC complex binds and stabilizes one strand of the AT-rich DNA unwinding element (DUE), permitting loading of DNA polymerase. After initiation quickly degrades to an ADP-DnaA complex that is not apt for DNA replication. Binds acidic phospholipids. This Limosilactobacillus reuteri (strain DSM 20016) (Lactobacillus reuteri) protein is Chromosomal replication initiator protein DnaA.